The following is a 987-amino-acid chain: Ephrin type-B receptor 4a (987 aa).

Residues M1–A24 form the signal peptide. Residues E25–G548 are Extracellular-facing. The Eph LBD domain occupies E26 to R205. 2 disulfide bridges follow: C70–C187 and C104–C114. The segment at D319 to N340 is disordered. The segment covering T326–P335 has biased composition (pro residues). Fibronectin type-III domains follow at residues P328 to N438 and L442 to D536. A helical membrane pass occupies residues I549 to I569. Residues R570–Y987 are Cytoplasmic-facing. The region spanning V621–I884 is the Protein kinase domain. Residues I627–V635 and K653 each bind ATP. The Proton acceptor role is filled by D746. The 65-residue stretch at S914–Q978 folds into the SAM domain.

The protein belongs to the protein kinase superfamily. Tyr protein kinase family. Ephrin receptor subfamily.

Its subcellular location is the cell membrane. It carries out the reaction L-tyrosyl-[protein] + ATP = O-phospho-L-tyrosyl-[protein] + ADP + H(+). Functionally, receptor tyrosine kinase which binds promiscuously transmembrane ephrin-B family ligands residing on adjacent cells, leading to contact-dependent bidirectional signaling into neighboring cells. The signaling pathway downstream of the receptor is referred to as forward signaling while the signaling pathway downstream of the ephrin ligand is referred to as reverse signaling. Together with its cognate ligand/functional ligand EFNB2 is involved in the regulation of cell adhesion and cell migration, and plays a central role in heart morphogenesis, angiogenesis and blood vessel remodeling and permeability. EPHB4-mediated forward signaling controls cellular repulsion and segregation from EFNB2-expressing cells. Involved in somitogenesis. The sequence is that of Ephrin type-B receptor 4a from Danio rerio (Zebrafish).